The chain runs to 186 residues: Ribosome-recycling factor (186 aa).

Belongs to the RRF family.

It is found in the cytoplasm. In terms of biological role, responsible for the release of ribosomes from messenger RNA at the termination of protein biosynthesis. May increase the efficiency of translation by recycling ribosomes from one round of translation to another. This Rickettsia africae (strain ESF-5) protein is Ribosome-recycling factor.